The sequence spans 788 residues: Response regulator SSK1 (788 aa).

The 158-residue stretch at 534 to 691 (NVLIVEDNII…WLERKVKEWG (158 aa)) folds into the Response regulatory domain. 4-aspartylphosphate is present on Asp583.

This sequence belongs to the SSK1 family.

The protein localises to the cytoplasm. In terms of biological role, two-domain response regulator protein in the two-component signal transduction system of the HOG1 pathway. Controls high-osmolarity adaptation and fungicide sensitivity via its regulation of the phosphorylation of HOG1. The protein is Response regulator SSK1 of Cochliobolus heterostrophus (strain C5 / ATCC 48332 / race O) (Southern corn leaf blight fungus).